Here is a 101-residue protein sequence, read N- to C-terminus: Defensin-like protein 222 (101 aa).

A signal peptide spans 1-21; it reads MRTIVLFSTLMILVLSCMSNA. 3 disulfides stabilise this stretch: Cys68-Cys85, Cys71-Cys90, and Cys75-Cys92.

Belongs to the DEFL family.

The protein resides in the secreted. The sequence is that of Defensin-like protein 222 from Arabidopsis thaliana (Mouse-ear cress).